The following is a 592-amino-acid chain: 2-succinyl-5-enolpyruvyl-6-hydroxy-3-cyclohexene-1-carboxylate synthase (592 aa).

It belongs to the TPP enzyme family. MenD subfamily. Homodimer. It depends on Mg(2+) as a cofactor. The cofactor is Mn(2+). Requires thiamine diphosphate as cofactor.

It carries out the reaction isochorismate + 2-oxoglutarate + H(+) = 5-enolpyruvoyl-6-hydroxy-2-succinyl-cyclohex-3-ene-1-carboxylate + CO2. Its pathway is quinol/quinone metabolism; 1,4-dihydroxy-2-naphthoate biosynthesis; 1,4-dihydroxy-2-naphthoate from chorismate: step 2/7. It participates in quinol/quinone metabolism; menaquinone biosynthesis. Functionally, catalyzes the thiamine diphosphate-dependent decarboxylation of 2-oxoglutarate and the subsequent addition of the resulting succinic semialdehyde-thiamine pyrophosphate anion to isochorismate to yield 2-succinyl-5-enolpyruvyl-6-hydroxy-3-cyclohexene-1-carboxylate (SEPHCHC). This is 2-succinyl-5-enolpyruvyl-6-hydroxy-3-cyclohexene-1-carboxylate synthase from Leifsonia xyli subsp. xyli (strain CTCB07).